The chain runs to 343 residues: Tribbles homolog 2 (343 aa).

The interval 25-50 (EELSSIRSAEPSQSFSPNLGSPSPPE) is disordered. Polar residues predominate over residues 29–45 (SIRSAEPSQSFSPNLGS). Residues 61–308 (IGKYLLLEPL…SQEILDHPWF (248 aa)) enclose the Protein kinase domain.

It belongs to the protein kinase superfamily. CAMK Ser/Thr protein kinase family. Tribbles subfamily. In terms of tissue distribution, expressed in granulosa cells of the dominant follicles of the ovary and down-regulated in ovulatory follicles.

Its subcellular location is the cytoplasm. It is found in the cytoskeleton. Functionally, interacts with MAPK kinases and regulates activation of MAP kinases. Does not display kinase activity. The sequence is that of Tribbles homolog 2 from Bos taurus (Bovine).